A 1262-amino-acid polypeptide reads, in one-letter code: Protein stoned-B (1262 aa).

Short sequence motifs (NPF) lie at residues 3–5 (NPF), 19–21 (NPF), 33–35 (NPF), and 43–45 (NPF). The tract at residues 17-36 (AANPFLMQSEPEPSSDNPFM) is disordered. The tract at residues 49-189 (ADDLELGAEP…DVSVDSGSSA (141 aa)) is disordered. The span at 50–60 (DDLELGAEPEA) shows a compositional bias: acidic residues. Residues 101-111 (PPQSQPQLQSH) are compositionally biased toward low complexity. Residues 115 to 124 (HPPPPRPLVP) are compositionally biased toward pro residues. Polar residues predominate over residues 128-145 (TQDLISTVSSQLDETSSE). Low complexity predominate over residues 172–189 (DSGLADLLDVSVDSGSSA). The short motif at 210–212 (NPF) is the NPF 5 element. 2 disordered regions span residues 225 to 452 (VPLP…SPPT) and 474 to 507 (EEMD…NFAP). Pro residues predominate over residues 233-272 (KQPPRPPPPRPAPPRPAPPGQAAPQRPPPPLAAVNPPPAA). Positions 325-345 (DLDETIGEGEPPEQEEPDTEQ) are enriched in acidic residues. The span at 384–401 (QVNNMAAPSGTASTQRAT) shows a compositional bias: polar residues. Residues 417–429 (DDEDEPEAMQEPE) are compositionally biased toward acidic residues. The NPF 6 signature appears at 493-495 (NPF). Residues Ser-623 and Ser-626 each carry the phosphoserine modification. The interval 643 to 709 (SGVAPQLAPP…QDTPQTPLYD (67 aa)) is disordered. The short motif at 673–675 (NPF) is the NPF 7 element. The 175-residue stretch at 728–902 (GWEMQLRQPN…KIPALRERAL (175 aa)) folds into the SHD domain. An interaction with Syt region spans residues 847–1108 (KEFGSDLKKL…KGIERILGAV (262 aa)). Positions 906-1219 (MEEVQVTAVD…ARHEYKVGIE (314 aa)) constitute an MHD domain. A disordered region spans residues 1226 to 1262 (TNAYLAATRPIREEPPTTATKPTASPVAPSDSDTDSN). Positions 1241 to 1254 (PTTATKPTASPVAP) are enriched in low complexity.

It belongs to the Stoned B family. Interacts with the second C2 domain of Syt.

Its subcellular location is the cytoplasm. The protein resides in the synapse. Its function is as follows. Adapter protein involved in endocytic recycling of synaptic vesicles membranes. May act by mediating the retrieval of synaptotagmin protein Syt from the plasma membrane, thereby facilitating the internalization of multiple synaptic vesicles from the plasma membrane. This Drosophila melanogaster (Fruit fly) protein is Protein stoned-B (stnB).